Consider the following 278-residue polypeptide: Formamidopyrimidine-DNA glycosylase (278 aa).

Catalysis depends on Pro-2, which acts as the Schiff-base intermediate with DNA. Glu-3 (proton donor) is an active-site residue. The active-site Proton donor; for beta-elimination activity is the Lys-59. 3 residues coordinate DNA: His-93, Arg-112, and Arg-153. The FPG-type zinc finger occupies 238 to 272; that stretch reads NVYDRAGEPCPRCQSTIERIVVAQRSTYFCPTCQI. Catalysis depends on Arg-262, which acts as the Proton donor; for delta-elimination activity.

This sequence belongs to the FPG family. In terms of assembly, monomer. Requires Zn(2+) as cofactor.

It catalyses the reaction Hydrolysis of DNA containing ring-opened 7-methylguanine residues, releasing 2,6-diamino-4-hydroxy-5-(N-methyl)formamidopyrimidine.. The enzyme catalyses 2'-deoxyribonucleotide-(2'-deoxyribose 5'-phosphate)-2'-deoxyribonucleotide-DNA = a 3'-end 2'-deoxyribonucleotide-(2,3-dehydro-2,3-deoxyribose 5'-phosphate)-DNA + a 5'-end 5'-phospho-2'-deoxyribonucleoside-DNA + H(+). Involved in base excision repair of DNA damaged by oxidation or by mutagenic agents. Acts as a DNA glycosylase that recognizes and removes damaged bases. Has a preference for oxidized purines, such as 7,8-dihydro-8-oxoguanine (8-oxoG). Has AP (apurinic/apyrimidinic) lyase activity and introduces nicks in the DNA strand. Cleaves the DNA backbone by beta-delta elimination to generate a single-strand break at the site of the removed base with both 3'- and 5'-phosphates. This is Formamidopyrimidine-DNA glycosylase from Chloroflexus aurantiacus (strain ATCC 29366 / DSM 635 / J-10-fl).